The sequence spans 65 residues: Potassium channel toxin kappa-KTx 2.6 (65 aa).

Residues 1–27 (MKTSKMICAFLLVLVVGTFNDISGAYG) form the signal peptide. Positions 28–39 (EYVEDQHSFKIE) are excised as a propeptide. Cystine bridges form between Cys45-Cys63 and Cys49-Cys59.

This sequence belongs to the short scorpion toxin superfamily. Potassium channel inhibitor kappa-KTx family. Kappa-KTx 2 subfamily. Expressed by the venom gland.

It is found in the secreted. Its function is as follows. Potassium channel inhibitor (Kv). This is Potassium channel toxin kappa-KTx 2.6 from Opisthacanthus cayaporum (South American scorpion).